Here is a 171-residue protein sequence, read N- to C-terminus: Putative charged multivesicular body protein 4B-like protein CHMP4BP1 (171 aa).

The segment covering 1–17 (MLSKKQEFLEKKIEQRH) has biased composition (basic and acidic residues). 2 disordered regions span residues 1-24 (MLSK…NKPA) and 132-171 (EQEE…KTTT).

This sequence belongs to the SNF7 family.

In Homo sapiens (Human), this protein is Putative charged multivesicular body protein 4B-like protein CHMP4BP1 (CHMP4BP1).